A 149-amino-acid chain; its full sequence is Arginine repressor (149 aa).

This sequence belongs to the ArgR family.

Its subcellular location is the cytoplasm. Its pathway is amino-acid biosynthesis; L-arginine biosynthesis [regulation]. Regulates arginine biosynthesis genes. The sequence is that of Arginine repressor from Chlorobium phaeobacteroides (strain DSM 266 / SMG 266 / 2430).